A 152-amino-acid chain; its full sequence is MAEIDSAQSQETVTQETQNKPMTTSFSIWPPTQRTRDAVINRLIESLSTPSILSKRYGTLPQDEASETARLIEEEAFAAAGSTASDADDGIEILQVYSKEISKRMIDTVKSRSAPAAASEGESKPSELPADASEPSSASGLTGEVSSVETEP.

Disordered stretches follow at residues Met-1 to Gln-33 and Asp-107 to Pro-152. The WPP stretch occupies residues Thr-12 to Pro-115. Polar residues predominate over residues Glu-134–Pro-152.

As to quaternary structure, interacts with WAP through its WPP domain. Binds to MFP1 and FPP proteins. Expressed in young tomato leaves, young fruits, and flowers (at protein level).

It is found in the nucleus envelope. The protein localises to the cytoplasm. It localises to the golgi apparatus. The protein resides in the nucleus. Its subcellular location is the nucleus matrix. This is MFP1 attachment factor 1 (MAF1) from Solanum lycopersicum (Tomato).